The sequence spans 446 residues: MSSQFTTPVVTEMQVIPVAGHDSMLMNLSGAHAPFFTRNIVIIKDNSGHTGVGEIPGGEKIRKTLEDAIPLVVGKTLGEYKNVLTLVRNTFADRDAGGRGLQTFDLRTTIHVVTGIEAAMLDLLGQHLGVNVASLLGDGQQRSEVEMLGYLFFVGNRKATPLPYQSQPDDSCDWYRLRHEEAMTPDAVVRLAEAAYEKYGFNDFKLKGGVLAGEEEAESIVALAQRFPQARITLDPNGAWSLNEAIKIGKYLKGSLAYAEDPCGAEQGFSGREVMAEFRRATGLPTATNMIATDWRQMGHTLSLQSVDIPLADPHFWTMQGSVRVAQMCHEFGLTWGSHSNNHFDISLAMFTHVAAAAPGKITAIDTHWIWQEGNQRLTKEPFEIKGGLVQVPEKPGLGVEIDMDQVMKAHELYQKHGLGARDDAMGMQYLIPGWTFDNKRPCMVR.

Residues His-32, Thr-103, Tyr-150, and Lys-205 each coordinate substrate. The active-site Proton acceptor is the Lys-207. Mg(2+) contacts are provided by Asp-235, Glu-266, and Asn-289. 235–237 (DPN) contributes to the substrate binding site. Residues Asn-289, 339–341 (HSN), His-368, and Arg-422 contribute to the substrate site. Catalysis depends on His-339, which acts as the Proton acceptor.

This sequence belongs to the mandelate racemase/muconate lactonizing enzyme family. GlucD subfamily. In terms of assembly, homodimer. It depends on Mg(2+) as a cofactor.

It carries out the reaction D-glucarate = 5-dehydro-4-deoxy-D-glucarate + H2O. Its pathway is carbohydrate acid metabolism; D-glucarate degradation; 2,5-dioxopentanoate from D-glucarate: step 1/2. In terms of biological role, catalyzes the dehydration of glucarate to 5-keto-4-deoxy-D-glucarate (5-kdGluc). Also acts on L-idarate. This chain is Glucarate dehydratase (gudD), found in Escherichia coli O157:H7.